A 159-amino-acid chain; its full sequence is Small ribosomal subunit protein uS9 (159 aa).

This sequence belongs to the universal ribosomal protein uS9 family.

This is Small ribosomal subunit protein uS9 from Methylocella silvestris (strain DSM 15510 / CIP 108128 / LMG 27833 / NCIMB 13906 / BL2).